The chain runs to 329 residues: Serine dehydratase-like (329 aa).

Met1 carries the post-translational modification N-acetylmethionine. Position 48 is an N6-(pyridoxal phosphate)lysine (Lys48).

It belongs to the serine/threonine dehydratase family. Monomer. Homodimer. The cofactor is pyridoxal 5'-phosphate. Expressed in lung cancer cell lines.

It catalyses the reaction L-serine = pyruvate + NH4(+). The enzyme catalyses L-threonine = 2-oxobutanoate + NH4(+). The catalysed reaction is L-glutamate = D-glutamate. Its function is as follows. Catalyzes the pyridoxal-phosphate-dependent dehydrative deamination of L-threonine and L-serine to ammonia and alpha-ketobutyrate and pyruvate, respectively. Also exhibits racemase activity towards L-glutamate and D-glutamate. The polypeptide is Serine dehydratase-like (SDSL) (Homo sapiens (Human)).